A 233-amino-acid chain; its full sequence is uncharacterized protein (233 aa).

This sequence belongs to the methyltransferase superfamily.

This is an uncharacterized protein from Bacillus subtilis (strain 168).